We begin with the raw amino-acid sequence, 360 residues long: Popeye domain-containing protein 1 (360 aa).

The Extracellular segment spans residues 1-48 (MNYTESSPLRESTAIGFTPELESIIPVPSNKTTCENWREIHHLVFHVA). N-linked (GlcNAc...) asparagine glycosylation is found at N2 and N30. The helical transmembrane segment at 49–69 (NICFAVGLVIPTTLHLHMIFL) threads the bilayer. R70 is a topological domain (cytoplasmic). Residues 71–91 (GMLTLGCTLYIVWATLYRCAL) form a helical membrane-spanning segment. A topological domain (extracellular) is located at residue D92. A helical transmembrane segment spans residues 93-113 (IMIWNSVFLGVNILHLSYLLY). Residues 93–115 (IMIWNSVFLGVNILHLSYLLYKK) form a required for interaction with CAV3 region. Over 114–360 (KKRPVKIEKE…PNTLKVHQLP (247 aa)) the chain is Cytoplasmic. The tract at residues 136–186 (RVPPDLFRRLTGQFCMIQTLKKGQTYAAEDKTSVDDRLSILLKGKMKVSYR) is required for interaction with KCNK2. A phosphoserine mark is found at S295 and S318. The segment at 317–360 (SSLHVSSPHQRASAKMKPIEEGAEDDDDVFEPASPNTLKVHQLP) is disordered. The segment covering 337-346 (EGAEDDDDVF) has biased composition (acidic residues). Residues 350 to 360 (SPNTLKVHQLP) are compositionally biased toward polar residues.

It belongs to the popeye family. Homodimer. Homodimerization requires the C-terminus cytoplasmic region. Interacts (via the C-terminus cytoplasmic tail) with TJP1. Interacts (via the C-terminus cytoplasmic tail) with ARHGEF25/GEFT (via the DH domain). Interacts (via the C-terminus cytoplasmic tail) with VAMP3. Interacts with KCNK2; the interaction enhances KCNK2 surface expression and is inhibited by cAMP. Interacts with CAV3. As to expression, expressed in epithelial cells (at protein level). Expressed in fetal and adult heart and skeletal muscle.

Its subcellular location is the lateral cell membrane. The protein localises to the cell junction. The protein resides in the tight junction. It is found in the membrane. It localises to the cell membrane. Its subcellular location is the sarcolemma. The protein localises to the caveola. Cell adhesion molecule involved in the establishment and/or maintenance of cell integrity. Involved in the formation and regulation of the tight junction (TJ) paracellular permeability barrier in epithelial cells. Plays a role in VAMP3-mediated vesicular transport and recycling of different receptor molecules through its interaction with VAMP3. Plays a role in the regulation of cell shape and movement by modulating the Rho-family GTPase activity through its interaction with ARHGEF25/GEFT. Induces primordial adhesive contact and aggregation of epithelial cells in a Ca(2+)-independent manner. Also involved in striated muscle regeneration and repair and in the regulation of cell spreading. Important for the maintenance of cardiac function. Plays a regulatory function in heart rate dynamics mediated, at least in part, through cAMP-binding and, probably, by increasing cell surface expression of the potassium channel KCNK2 and enhancing current density. Is also a caveolae-associated protein important for the preservation of caveolae structural and functional integrity as well as for heart protection against ischemia injury. This is Popeye domain-containing protein 1 from Homo sapiens (Human).